We begin with the raw amino-acid sequence, 137 residues long: Small ribosomal subunit protein uS12 (137 aa).

Residues 1–55 (MPTINQLVRKPRKSKVEKSDSPALNKGYNSFKKTQTNVNSPQKRGVCTRVGTMTP) are disordered. Positions 27 to 42 (GYNSFKKTQTNVNSPQ) are enriched in polar residues. Asp102 is modified (3-methylthioaspartic acid).

The protein belongs to the universal ribosomal protein uS12 family. Part of the 30S ribosomal subunit. Contacts proteins S8 and S17. May interact with IF1 in the 30S initiation complex.

In terms of biological role, with S4 and S5 plays an important role in translational accuracy. Functionally, interacts with and stabilizes bases of the 16S rRNA that are involved in tRNA selection in the A site and with the mRNA backbone. Located at the interface of the 30S and 50S subunits, it traverses the body of the 30S subunit contacting proteins on the other side and probably holding the rRNA structure together. The combined cluster of proteins S8, S12 and S17 appears to hold together the shoulder and platform of the 30S subunit. This is Small ribosomal subunit protein uS12 from Enterococcus faecalis (strain ATCC 700802 / V583).